We begin with the raw amino-acid sequence, 389 residues long: Alanine racemase 1 (389 aa).

Lysine 41 functions as the Proton acceptor; specific for D-alanine in the catalytic mechanism. Lysine 41 carries the N6-(pyridoxal phosphate)lysine modification. Arginine 137 provides a ligand contact to substrate. The active-site Proton acceptor; specific for L-alanine is the tyrosine 266. Methionine 313 is a binding site for substrate.

The protein belongs to the alanine racemase family. The cofactor is pyridoxal 5'-phosphate.

It carries out the reaction L-alanine = D-alanine. The protein operates within amino-acid biosynthesis; D-alanine biosynthesis; D-alanine from L-alanine: step 1/1. Catalyzes the interconversion of L-alanine and D-alanine. May also act on other amino acids. The chain is Alanine racemase 1 (alr1) from Bacillus subtilis (strain 168).